We begin with the raw amino-acid sequence, 2513 residues long: Probable polyketide synthase 7 (2513 aa).

The Ketosynthase family 3 (KS3) domain maps to 11–441 (EKGVAIVGIG…GSNCCLLISE (431 aa)). Catalysis depends on for beta-ketoacyl synthase activity residues C181, H323, and H362. An acyl/malonyl transferase region spans residues 632–665 (GVNPSFILGHSLGEISASYCSGMIDLDTFCYTVY). S642 functions as the For acyl/malonyl transferase activity in the catalytic mechanism. Positions 922 to 1044 (IDHLGISNSF…SNFQLLDHGN (123 aa)) are N-terminal hotdog fold. The region spanning 922–1206 (IDHLGISNSF…CKSLIPIKDS (285 aa)) is the PKS/mFAS DH domain. The Proton acceptor; for dehydratase activity role is filled by H956. The interval 1061–1206 (NLSKLTKNEL…CKSLIPIKDS (146 aa)) is C-terminal hotdog fold. The Proton donor; for dehydratase activity role is filled by D1119. The Carrier domain maps to 2426–2503 (IGNKNIDELF…ISIKMILNSL (78 aa)). At S2463 the chain carries O-(pantetheine 4'-phosphoryl)serine.

The cofactor is pantetheine 4'-phosphate.

Probable polyketide synthase. This is Probable polyketide synthase 7 (pks7) from Dictyostelium discoideum (Social amoeba).